Here is a 1049-residue protein sequence, read N- to C-terminus: Isoleucine--tRNA ligase (1049 aa).

The 'HIGH' region motif lies at 48–59 (PYPSSPTPHIGT). The 'KMSKS' region motif lies at 597–601 (EMHKS). K600 lines the ATP pocket.

It belongs to the class-I aminoacyl-tRNA synthetase family. IleS type 2 subfamily. As to quaternary structure, monomer. Requires Zn(2+) as cofactor.

Its subcellular location is the cytoplasm. The enzyme catalyses tRNA(Ile) + L-isoleucine + ATP = L-isoleucyl-tRNA(Ile) + AMP + diphosphate. Catalyzes the attachment of isoleucine to tRNA(Ile). As IleRS can inadvertently accommodate and process structurally similar amino acids such as valine, to avoid such errors it has two additional distinct tRNA(Ile)-dependent editing activities. One activity is designated as 'pretransfer' editing and involves the hydrolysis of activated Val-AMP. The other activity is designated 'posttransfer' editing and involves deacylation of mischarged Val-tRNA(Ile). The chain is Isoleucine--tRNA ligase from Saccharolobus islandicus (strain M.16.27) (Sulfolobus islandicus).